Consider the following 95-residue polypeptide: Integration host factor subunit beta (95 aa).

It belongs to the bacterial histone-like protein family. Heterodimer of an alpha and a beta chain.

In terms of biological role, this protein is one of the two subunits of integration host factor, a specific DNA-binding protein that functions in genetic recombination as well as in transcriptional and translational control. The polypeptide is Integration host factor subunit beta (Klebsiella pneumoniae (strain 342)).